We begin with the raw amino-acid sequence, 351 residues long: Adenine deaminase (351 aa).

3 residues coordinate Zn(2+): His20, His22, and His200. Residue Glu203 is the Proton donor of the active site. Asp281 lines the Zn(2+) pocket. Asp282 serves as a coordination point for substrate.

This sequence belongs to the metallo-dependent hydrolases superfamily. Adenosine and AMP deaminases family. Adenine deaminase type 2 subfamily. It depends on Zn(2+) as a cofactor.

It catalyses the reaction adenine + H2O + H(+) = hypoxanthine + NH4(+). Functionally, catalyzes the hydrolytic deamination of adenine to hypoxanthine. Plays an important role in the purine salvage pathway and in nitrogen catabolism. The sequence is that of Adenine deaminase from Cupriavidus pinatubonensis (strain JMP 134 / LMG 1197) (Cupriavidus necator (strain JMP 134)).